Reading from the N-terminus, the 1429-residue chain is Probable ATP-dependent RNA helicase spindle-E (1429 aa).

One can recognise a Helicase ATP-binding domain in the interval 121–288 (VNAINTHQVV…FSTKVSVPPV (168 aa)). 134–141 (GETGCGKT) is an ATP binding site. Residues 234–237 (DEVH) carry the DEAH box motif. In terms of domain architecture, Helicase C-terminal spans 349–521 (QSEQSYDDAK…NSVLKAKLLD (173 aa)). The Tudor domain occupies 933–996 (AGVLTKGMMV…RLMTKELLSQ (64 aa)).

This sequence belongs to the DEAD box helicase family. DEAH subfamily.

Its subcellular location is the cytoplasm. It carries out the reaction ATP + H2O = ADP + phosphate + H(+). Its function is as follows. Probable ATP-binding RNA helicase which plays a central role during spermatogenesis and oogenesis by repressing transposable elements and preventing their mobilization, which is essential for the germline integrity. Acts via the piRNA metabolic process, which mediates the repression of transposable elements during meiosis by forming complexes composed of piRNAs and Piwi and govern the methylation and subsequent repression of transposons. Involved in the repression of LTR retrotransposon copia. Also involved in telomere regulation by repressing specialized telomeric retroelements HeT-A, TAHRE, and TART; Drosophila telomeres being maintained by transposition of specialized telomeric retroelements. Involved in telomeric trans-silencing, a repression mechanism by which a transposon or a transgene inserted in subtelomeric heterochromatin has the capacity to repress in trans in the female germline, a homologous transposon, or transgene located in euchromatin. Involved in the repression of testis-expressed Stellate genes by the homologous Su(Ste) repeats. Required for anteroposterior and dorsoventral axis formation during oogenesis. The chain is Probable ATP-dependent RNA helicase spindle-E (spn-E) from Drosophila ananassae (Fruit fly).